Reading from the N-terminus, the 380-residue chain is Putative 8-amino-7-oxononanoate synthase (380 aa).

Position 18 (arginine 18) interacts with substrate. A pyridoxal 5'-phosphate-binding site is contributed by glycine 106–tyrosine 107. Residue histidine 131 participates in substrate binding. Pyridoxal 5'-phosphate contacts are provided by residues serine 179, aspartate 205–histidine 208, and threonine 236–lysine 239. An N6-(pyridoxal phosphate)lysine modification is found at lysine 239. Substrate is bound at residue threonine 352.

The protein belongs to the class-II pyridoxal-phosphate-dependent aminotransferase family. BioF subfamily. As to quaternary structure, homodimer. The cofactor is pyridoxal 5'-phosphate.

The catalysed reaction is 6-carboxyhexanoyl-[ACP] + L-alanine + H(+) = (8S)-8-amino-7-oxononanoate + holo-[ACP] + CO2. It participates in cofactor biosynthesis; biotin biosynthesis. Catalyzes the decarboxylative condensation of pimeloyl-[acyl-carrier protein] and L-alanine to produce 8-amino-7-oxononanoate (AON), [acyl-carrier protein], and carbon dioxide. The sequence is that of Putative 8-amino-7-oxononanoate synthase (bioF) from Neisseria meningitidis serogroup C / serotype 2a (strain ATCC 700532 / DSM 15464 / FAM18).